The sequence spans 648 residues: Probable alpha-galactosidase D (648 aa).

Positions 1–17 (MESIVWLLLLSPALVAG) are cleaved as a signal peptide. 2 N-linked (GlcNAc...) asparagine glycosylation sites follow: asparagine 84 and asparagine 90. A disulfide bridge connects residues cysteine 123 and cysteine 156. The active-site Nucleophile is aspartate 154. A substrate-binding site is contributed by 199–203 (EWGID). Aspartate 221 acts as the Proton donor in catalysis. N-linked (GlcNAc...) asparagine glycosylation is found at asparagine 339, asparagine 505, and asparagine 572.

Belongs to the glycosyl hydrolase 27 family.

The protein resides in the secreted. It catalyses the reaction Hydrolysis of terminal, non-reducing alpha-D-galactose residues in alpha-D-galactosides, including galactose oligosaccharides, galactomannans and galactolipids.. Its function is as follows. Hydrolyzes a variety of simple alpha-D-galactoside as well as more complex molecules such as oligosaccharides and polysaccharides. This is Probable alpha-galactosidase D (aglD) from Neosartorya fischeri (strain ATCC 1020 / DSM 3700 / CBS 544.65 / FGSC A1164 / JCM 1740 / NRRL 181 / WB 181) (Aspergillus fischerianus).